We begin with the raw amino-acid sequence, 316 residues long: Succinoglycan biosynthesis protein ExoV (316 aa).

It participates in glycan metabolism; exopolysaccharide biosynthesis. In Rhizobium meliloti (strain 1021) (Ensifer meliloti), this protein is Succinoglycan biosynthesis protein ExoV (exoV).